Consider the following 275-residue polypeptide: Ovocalyxin-32 (275 aa).

Positions 1-23 (MPGLRAALPAALLLLSSFPPAAA) are cleaved as a signal peptide. Cystatin LXN-type domains are found at residues 32–131 (PGVM…NKKQ) and 151–255 (TANY…GLED). Positions 254-275 (EDGSGQDSGSAAGTSHETKGNF) are disordered. The segment covering 256–268 (GSGQDSGSAAGTS) has biased composition (low complexity).

It belongs to the protease inhibitor I47 (latexin) family. In terms of tissue distribution, expressed at high levels in the uterine and isthmus regions of the oviduct, and concentrated in the eggshell.

It localises to the secreted. Component of the matrix of the eggshell. The protein is Ovocalyxin-32 of Gallus gallus (Chicken).